The sequence spans 78 residues: Apolipoprotein C-I (78 aa).

Residues 1-26 (MRLILWLPVLVVVLLMVTEGPAPAQG) form the signal peptide.

This sequence belongs to the apolipoprotein C1 family.

The protein resides in the secreted. Inhibitor of lipoprotein binding to the low density lipoprotein (LDL) receptor, LDL receptor-related protein, and very low density lipoprotein (VLDL) receptor. Associates with high density lipoproteins (HDL) and the triacylglycerol-rich lipoproteins in the plasma and makes up about 10% of the protein of the VLDL and 2% of that of HDL. Appears to interfere directly with fatty acid uptake and is also the major plasma inhibitor of cholesteryl ester transfer protein (CETP). Binds free fatty acids and reduces their intracellular esterification. Modulates the interaction of APOE with beta-migrating VLDL and inhibits binding of beta-VLDL to the LDL receptor-related protein. The protein is Apolipoprotein C-I (APOC1) of Panthera tigris altaica (Siberian tiger).